Consider the following 247-residue polypeptide: MADS-box transcription factor 1 (247 aa).

In terms of domain architecture, MADS-box spans 1-61 (MGRGRVELKR…GKLYEFCSTS (61 aa)). A K-box domain is found at 91-181 (ELSSQQEYLK…RQRMEGYQIN (91 aa)).

In terms of tissue distribution, expressed abundantly in the seed coat and to lesser extent in young buds, carpels, petals, and stamen.

The protein resides in the nucleus. Its function is as follows. Probable transcription factor. The protein is MADS-box transcription factor 1 of Pisum sativum (Garden pea).